The following is a 101-amino-acid chain: Gamma-secretase subunit PEN-2 (101 aa).

Residues 1 to 17 (MNLERVSNEEKLNLCRK) are Cytoplasmic-facing. Positions 18-36 (YYLGGFAFLPFLWLVNIFW) form an intramembrane region, helical. The Cytoplasmic segment spans residues 37–57 (FFREAFLAPAYTEQSQIKGYV). Residues 58–78 (WRSAVGFLFWVIILATWITIF) form a helical membrane-spanning segment. The Lumenal portion of the chain corresponds to 79–101 (QIYRPRWGALGDYLSFTIPLGTP).

Belongs to the PEN-2 family. As to quaternary structure, the functional gamma-secretase complex is composed of at least four polypeptides: a presenilin homodimer (PSEN1 or PSEN2), nicastrin (NCSTN), APH1 (APH1A or APH1B) and PSENEN.

It is found in the endoplasmic reticulum membrane. It localises to the golgi apparatus. The protein localises to the golgi stack membrane. Its subcellular location is the cell membrane. The protein resides in the membrane. Its function is as follows. Essential subunit of the gamma-secretase complex, an endoprotease complex that catalyzes the intramembrane cleavage of integral membrane proteins such as Notch receptors and APP (amyloid-beta precursor protein). The gamma-secretase complex plays a role in Notch and Wnt signaling cascades and regulation of downstream processes via its role in processing key regulatory proteins, and by regulating cytosolic CTNNB1 levels. PSENEN modulates both endoproteolysis of presenilin and gamma-secretase activity. The chain is Gamma-secretase subunit PEN-2 (Psenen) from Mus musculus (Mouse).